A 336-amino-acid polypeptide reads, in one-letter code: USG-1 protein homolog (336 aa).

It belongs to the aspartate-semialdehyde dehydrogenase family.

This chain is USG-1 protein homolog (usg), found in Pseudomonas aeruginosa (strain ATCC 15692 / DSM 22644 / CIP 104116 / JCM 14847 / LMG 12228 / 1C / PRS 101 / PAO1).